A 636-amino-acid polypeptide reads, in one-letter code: MQINFEPMPNSVTHLENNSPSRLKNNKTVEEHKEHEPDLQTQSEMRRESNGSPKDTAVTNQNGDQPHENVIHTQIIKKDNPFFNYMQDNVDGSDENGKNDDDDENAKNAGSDDNEDQLLQPNRRKNSKERRRSSVATSKDSSPDVPYNTLNHNASGMTKEGKKRAQILEASKVSEGQGRTYIAYAIKYGDSIVKRRYSDFESLRKVLVKLFPISLIPPIPEKQSLKSYGKAMTYSKSSYLLPTESGDSVDLSLSVINGPVTTNDEKLIRHRIRMLTSFLNRLLKNQEITKTSIVYDFLDPNNKNWNDLITSSLTISSLPKSVLQCNPIDPTNTTKAHSYLPVPSSSTQLLASKDNHSASDADEFTKIEAEFKNYEQLIHSGLYKYSRATTKEVNYLREDLKGISSEFAQLSTDETKNESGLAELLSHSSDAYGTLQEILETLVGNLHYNINEPLSECAHMATAVRDLIHYRRLKLIQKDILERTILYKRGQLIKFQQQENDHKQIDNMVKEELGTNGAVNLENPAGPQSYSGKFINKFTQLAIIIKDSVSYQEQDPAAAARSLEKELIQLDETLKVATSDLVVISETLKNTELPNFIKERDEELTQIFKNYAKYMKENATRNLEIWKELHNRIQEA.

2 disordered regions span residues 1 to 68 (MQIN…QPHE) and 84 to 163 (NYMQ…EGKK). Positions 10–23 (NSVTHLENNSPSRL) are enriched in polar residues. A compositionally biased stretch (basic and acidic residues) spans 27–49 (KTVEEHKEHEPDLQTQSEMRRES). Polar residues predominate over residues 50–64 (NGSPKDTAVTNQNGD). A compositionally biased stretch (basic residues) spans 122 to 133 (NRRKNSKERRRS). The PX domain maps to 160 to 305 (EGKKRAQILE…DFLDPNNKNW (146 aa)). A 1,2-diacyl-sn-glycero-3-phospho-(1D-myo-inositol-3-phosphate) is bound by residues Arg-196, Ser-198, Lys-222, and Arg-271.

Belongs to the sorting nexin family.

It is found in the endosome membrane. The protein localises to the preautophagosomal structure membrane. In terms of biological role, required for cytoplasm to vacuole transport (Cvt), pexophagy and mitophagy. Also involved in endoplasmic reticulum-specific autophagic process and is essential for the survival of cells subjected to severe ER stress. Functions in protein retrieval from the endocytic pathway. The sequence is that of Autophagy-related protein 20 (ATG20) from Kluyveromyces lactis (strain ATCC 8585 / CBS 2359 / DSM 70799 / NBRC 1267 / NRRL Y-1140 / WM37) (Yeast).